A 128-amino-acid chain; its full sequence is Large ribosomal subunit protein mL55 (128 aa).

The transit peptide at 1–33 (MAAVGSLLGRLRQSTVKATGPALRRLHTSSWRA) directs the protein to the mitochondrion. Serine 85 is modified (phosphoserine).

The protein belongs to the mitochondrion-specific ribosomal protein mL55 family. Component of the mitochondrial large ribosomal subunit (mt-LSU). Mature mammalian 55S mitochondrial ribosomes consist of a small (28S) and a large (39S) subunit. The 28S small subunit contains a 12S ribosomal RNA (12S mt-rRNA) and 30 different proteins. The 39S large subunit contains a 16S rRNA (16S mt-rRNA), a copy of mitochondrial valine transfer RNA (mt-tRNA(Val)), which plays an integral structural role, and 52 different proteins.

It is found in the mitochondrion. The polypeptide is Large ribosomal subunit protein mL55 (MRPL55) (Homo sapiens (Human)).